The following is a 723-amino-acid chain: Solute carrier organic anion transporter family member 4A1 (723 aa).

Residues 1–102 are Cytoplasmic-facing; that stretch reads MPQHAMGDTH…KCLQVFNTPK (102 aa). The interval 23-64 is disordered; that stretch reads SSATDSGCDTPPSSRASPASLRSAHGTLGSSSQPLFEPQAEK. Residues 33–46 are compositionally biased toward low complexity; sequence PPSSRASPASLRSA. Serine 39, serine 42, and serine 45 each carry phosphoserine. Residues 103-123 form a helical membrane-spanning segment; the sequence is GFLFFLCAASFLQGMTVNGFI. Topologically, residues 124–142 are extracellular; sequence NTVITSIERRFDLHSYQSG. Residues 143-163 form a helical membrane-spanning segment; sequence LIASSYDIAACLCLTFVSYFG. The Cytoplasmic portion of the chain corresponds to 164 to 169; sequence GNGHKP. Residues 170-194 form a helical membrane-spanning segment; it reads RWLGWGVLVLGIGSLVFALPHFTAG. At 195-224 the chain is on the extracellular side; the sequence is RYEVEMDEGLGTGTCLTNQSHVECKDSASG. N-linked (GlcNAc...) asparagine glycosylation is present at asparagine 212. A helical transmembrane segment spans residues 225–255; that stretch reads LSNYRLIFMLGQLLHGVGATPLYTLGVTYLD. The Cytoplasmic segment spans residues 256 to 274; sequence ENVKSSYSPIYIAIFYTAA. Residues 275-295 traverse the membrane as a helical segment; sequence ILGPAAGYLIGGAMLNVYTEV. Residues 296-309 lie on the Extracellular side of the membrane; the sequence is GQRTELTTDSPLWV. The chain crosses the membrane as a helical span at residues 310 to 334; that stretch reads GAWWIGFLGTGIAAFLIAIPILGYP. Residues 335–380 are Cytoplasmic-facing; it reads RQLPGSQRYVVMRAAETQQLKDHSRGAVSNPAFGKTVRDLPLSIWL. Residues 381-402 form a helical membrane-spanning segment; the sequence is LLRNPTFILLCLAGATEATLIA. Topologically, residues 403–422 are extracellular; it reads GMSTFGPKFFEAQFSLSASE. Residues 423 to 446 form a helical membrane-spanning segment; the sequence is AATLFGYLVVPAGGGGTLLGGFLV. Residues 447–450 lie on the Cytoplasmic side of the membrane; it reads NKFK. A helical membrane pass occupies residues 451–473; sequence LRGSGIIRFCLFCTLTSLLAFFV. Residues 474–582 lie on the Extracellular side of the membrane; the sequence is FLMHCPNVHM…ASTCQSKPFL (109 aa). Residues 500–557 form the Kazal-like domain; that stretch reads LDLKAACNAIYCCQPKHYSPLCGSDGTMYYSPCYAGCPADAETDLGGQKVYRGCSCIL. Disulfide bonds link cysteine 506–cysteine 536 and cysteine 521–cysteine 555. A glycan (N-linked (GlcNAc...) asparagine) is linked at asparagine 566. The helical transmembrane segment at 583-605 threads the bilayer; it reads LVLVFVVIIFTFLSSIPALTATL. Over 606-614 the chain is Cytoplasmic; sequence RCVSDRQRS. A helical transmembrane segment spans residues 615 to 640; that stretch reads FALGIQWIVVRTLGSIPGPIAFGWVI. Residues 641–673 lie on the Extracellular side of the membrane; that stretch reads DKACLLWQDQCGHQGSCFVYENEAMSRYMLIAG. Residues 674-691 form a helical membrane-spanning segment; sequence LTFKVLGFLFFVAAYFLY. Residues 692-723 are Cytoplasmic-facing; it reads KSPSVSSDGLEASLPSQSSASDSPTEQLQSNV. Residues 700–723 are disordered; it reads GLEASLPSQSSASDSPTEQLQSNV. Low complexity predominate over residues 701–723; it reads LEASLPSQSSASDSPTEQLQSNV.

The protein belongs to the organo anion transporter (TC 2.A.60) family.

It localises to the cell membrane. The enzyme catalyses 3,3',5-triiodo-L-thyronine(out) + L-glutamate(in) = 3,3',5-triiodo-L-thyronine(in) + L-glutamate(out). It catalyses the reaction L-thyroxine(out) + L-glutamate(in) = L-thyroxine(in) + L-glutamate(out). The catalysed reaction is estrone 3-sulfate(out) + L-glutamate(in) = estrone 3-sulfate(in) + L-glutamate(out). It carries out the reaction taurocholate(out) + L-glutamate(in) = taurocholate(in) + L-glutamate(out). The enzyme catalyses 3,3',5-triiodo-L-thyronine(out) = 3,3',5-triiodo-L-thyronine(in). It catalyses the reaction L-thyroxine(out) = L-thyroxine(in). The catalysed reaction is 3,3',5'-triiodo-L-thyronine(out) = 3,3',5'-triiodo-L-thyronine(in). It carries out the reaction estrone 3-sulfate(out) = estrone 3-sulfate(in). The enzyme catalyses 17beta-estradiol 17-O-(beta-D-glucuronate)(out) = 17beta-estradiol 17-O-(beta-D-glucuronate)(in). It catalyses the reaction taurocholate(out) = taurocholate(in). The catalysed reaction is prostaglandin E2(out) = prostaglandin E2(in). Organic anion antiporter with apparent broad substrate specificity. Recognizes various substrates including thyroid hormones 3,3',5-triiodo-L-thyronine (T3), L-thyroxine (T4) and 3,3',5'-triiodo-L-thyronine (rT3), conjugated steroids such as estrone 3-sulfate and estradiol 17-beta glucuronide, bile acids such as taurocholate and prostanoids such as prostaglandin E2, likely operating in a tissue-specific manner. May be involved in uptake of metabolites from the circulation into organs such as kidney, liver or placenta. Possibly drives the selective transport of thyroid hormones and estrogens coupled to an outward glutamate gradient across the microvillous membrane of the placenta. The transport mechanism, its electrogenicity and potential tissue-specific counterions remain to be elucidated. The protein is Solute carrier organic anion transporter family member 4A1 (Slco4a1) of Mus musculus (Mouse).